A 1456-amino-acid chain; its full sequence is CLIP-associating protein 1-B (1456 aa).

HEAT repeat units follow at residues 68-87, 88-124, and 163-200; these read LLGMDILSALVTRLQDRFRT, QIGTVLPSLMDRLGDAKDSVRDQDQNLLIKIMEQASN, and LTLSKIVPHICNLLGDPNSQVRDAAINCLVEIYRHVGE. Positions 237-296 are disordered; it reads TDKNFDDEDSVDGNRPSSASSSASSKAPQTARRGVSLGTGRRPGTSSAAPKTGGTAKEGA. Over residues 284–296 the composition is skewed to low complexity; that stretch reads AAPKTGGTAKEGA. Residues 442-479 form an HEAT 4 repeat; sequence THVPRLIPIITSNCTSKSVAVRRRCYEFLDLLLQEWQT. Disordered regions lie at residues 547–728 and 776–796; these read SIVS…DRFG and GMYSDDDANSDASSACSERSY. Residues 550–569 are compositionally biased toward low complexity; that stretch reads SLPQSDRSSSSSQESLNRPL. A compositionally biased stretch (polar residues) spans 573 to 594; that stretch reads RSPTGSTVSRATSKSTTGSLQR. Composition is skewed to low complexity over residues 603–618, 642–656, and 665–679; these read AAATSKTKAASGASTA, QSSGSTTSTASTPAD, and VVSQSQPGSRSSSPG. The segment covering 711 to 721 has biased composition (polar residues); the sequence is QGCSRETSPSR. A compositionally biased stretch (low complexity) spans 785-796; that stretch reads SDASSACSERSY. An HEAT 5 repeat occupies 930–967; sequence QQFNILMRFIVDQTQTPNLKVKVAILKYIESLARQMDP. Disordered stretches follow at residues 1037–1080 and 1121–1147; these read LKNS…GLSP and VRRDGKKESEMGSCDAGMASPASDLRG. Residues 1038–1050 show a composition bias toward low complexity; it reads KNSSNSSMGSPSN. A compositionally biased stretch (polar residues) spans 1062–1074; sequence SRASPLTSPTNCS. Over residues 1121–1130 the composition is skewed to basic and acidic residues; it reads VRRDGKKESE. 2 HEAT repeats span residues 1260-1297 and 1378-1415; these read EHFKTILLLLLETLGDKDHAIRALALRVLREILRNQPA and QILPDIIPGLLQGYDNTESSVRKASVFCLVAVYSVIGE.

Belongs to the CLASP family. In terms of assembly, interacts (via C-terminus) with clip1/clip-170, and cenpe.

The protein localises to the cytoplasm. It is found in the cytoskeleton. The protein resides in the microtubule organizing center. Its subcellular location is the centrosome. It localises to the chromosome. The protein localises to the centromere. It is found in the kinetochore. The protein resides in the spindle. Its subcellular location is the golgi apparatus. It localises to the trans-Golgi network. In terms of biological role, microtubule plus-end tracking protein that promotes the stabilization of dynamic microtubules during anaphase. Plays a crucial role in chromatin-induced microtubule formation. May also act at microtubule minus ends. May be involved in the nucleation of noncentrosomal microtubules originating from the trans-Golgi network (TGN). The polypeptide is CLIP-associating protein 1-B (Xenopus laevis (African clawed frog)).